Reading from the N-terminus, the 194-residue chain is Fe/S biogenesis protein NfuA (194 aa).

Positions 151 and 154 each coordinate [4Fe-4S] cluster.

This sequence belongs to the NfuA family. As to quaternary structure, homodimer. Requires [4Fe-4S] cluster as cofactor.

In terms of biological role, involved in iron-sulfur cluster biogenesis. Binds a 4Fe-4S cluster, can transfer this cluster to apoproteins, and thereby intervenes in the maturation of Fe/S proteins. Could also act as a scaffold/chaperone for damaged Fe/S proteins. In Mannheimia succiniciproducens (strain KCTC 0769BP / MBEL55E), this protein is Fe/S biogenesis protein NfuA.